Here is a 346-residue protein sequence, read N- to C-terminus: Low specificity L-threonine aldolase (346 aa).

At K207 the chain carries N6-(pyridoxal phosphate)lysine.

The protein belongs to the threonine aldolase family. As to quaternary structure, homotetramer. Pyridoxal 5'-phosphate is required as a cofactor.

It carries out the reaction L-threonine = acetaldehyde + glycine. It catalyses the reaction L-allo-threonine = acetaldehyde + glycine. Catalyzes the cleavage of L-allo-threonine and L-threonine to glycine and acetaldehyde. This chain is Low specificity L-threonine aldolase (ltaE), found in Pseudomonas aeruginosa (strain ATCC 15692 / DSM 22644 / CIP 104116 / JCM 14847 / LMG 12228 / 1C / PRS 101 / PAO1).